The chain runs to 1235 residues: Major DNA-binding protein (1235 aa).

The segment at 536 to 584 (GGLDGKGDDGVPGGGAGGGGGRDVSGGPSDGLGGGRGGGGGGDSGGMMG) is disordered. Over residues 545-584 (GVPGGGAGGGGGRDVSGGPSDGLGGGRGGGGGGDSGGMMG) the composition is skewed to gly residues. The short motif at 846 to 847 (FW) is the Required for filament formation element. Over residues 1214–1226 (GVGGSSGGGGGSG) the composition is skewed to gly residues. Residues 1214–1235 (GVGGSSGGGGGSGLLPAKRSRL) form a disordered region. Residues 1232–1235 (RSRL) form a required for nuclear localization region.

It belongs to the herpesviridae major DNA-binding protein family. Homooligomers. Forms double-helical filaments necessary for the formation of replication compartments within the host nucleus. Interacts with the origin-binding protein. Interacts with the helicase primase complex; this interaction stimulates primer synthesis activity of the helicase-primase complex. Interacts with the DNA polymerase. Interacts with the alkaline exonuclease; this interaction increases its nuclease processivity.

It is found in the host nucleus. Plays several crucial roles in viral infection. Participates in the opening of the viral DNA origin to initiate replication by interacting with the origin-binding protein. May disrupt loops, hairpins and other secondary structures present on ssDNA to reduce and eliminate pausing of viral DNA polymerase at specific sites during elongation. Promotes viral DNA recombination by performing strand-transfer, characterized by the ability to transfer a DNA strand from a linear duplex to a complementary single-stranded DNA circle. Can also catalyze the renaturation of complementary single strands. Additionally, reorganizes the host cell nucleus, leading to the formation of prereplicative sites and replication compartments. This process is driven by the protein which can form double-helical filaments in the absence of DNA. This chain is Major DNA-binding protein, found in Homo sapiens (Human).